The sequence spans 86 residues: Anti-adapter protein IraP (86 aa).

Residues 1 to 36 (MKNLIAELLFKLAQKEEESKELCAQVEALEIIVTAM) adopt a coiled-coil conformation.

The protein belongs to the IraP family. Interacts with RssB.

It localises to the cytoplasm. Inhibits RpoS proteolysis by regulating RssB activity, thereby increasing the stability of the sigma stress factor RpoS especially during phosphate starvation, but also in stationary phase and during nitrogen starvation. Its effect on RpoS stability is due to its interaction with RssB, which probably blocks the interaction of RssB with RpoS, and the consequent delivery of the RssB-RpoS complex to the ClpXP protein degradation pathway. The protein is Anti-adapter protein IraP of Escherichia coli O7:K1 (strain IAI39 / ExPEC).